The sequence spans 642 residues: DNA gyrase subunit B (642 aa).

Residues 422-536 form the Toprim domain; sequence CELFIVEGDS…AGYVYIAQPP (115 aa). Positions 428, 501, and 503 each coordinate Mg(2+).

It belongs to the type II topoisomerase family. As to quaternary structure, heterotetramer, composed of two GyrA and two GyrB chains. Within the heterotetramer, GyrA contains the active site tyrosine that forms a covalent intermediate with the DNA, while GyrB contributes the cofactor binding sites and catalyzes ATP hydrolysis. The cofactor is Mg(2+). Mn(2+) is required as a cofactor. Ca(2+) serves as cofactor.

It localises to the cytoplasm. The enzyme catalyses ATP-dependent breakage, passage and rejoining of double-stranded DNA.. With respect to regulation, pyrrolopyrimidines inhibit both GyrB and its paralog in topoisomerase IV (parE). Its function is as follows. DNA gyrase negatively supercoils closed circular double-stranded DNA in an ATP-dependent manner and also catalyzes the interconversion of other topological isomers of double-stranded DNA rings, including catenanes and knotted rings. This Enterococcus faecalis (strain ATCC 700802 / V583) protein is DNA gyrase subunit B.